Consider the following 213-residue polypeptide: Adenylate kinase (213 aa).

Residue 10-15 participates in ATP binding; sequence GAGKGT. The tract at residues 30-59 is NMP; sequence STGDMFRAAMANQTEMGILAKSYIDKGDLV. AMP contacts are provided by residues Thr31, Arg36, 57-59, 86-89, and Gln93; these read DLV and GYPR. Positions 127–160 are LID; the sequence is GRIIHKETGETFHKVFNPPVGDYKEEDFYQREDD. ATP is bound by residues Arg128 and 137–138; that span reads TF. 2 residues coordinate AMP: Arg157 and Arg168. Residue Gln196 participates in ATP binding.

It belongs to the adenylate kinase family. In terms of assembly, monomer.

The protein resides in the cytoplasm. It carries out the reaction AMP + ATP = 2 ADP. Its pathway is purine metabolism; AMP biosynthesis via salvage pathway; AMP from ADP: step 1/1. In terms of biological role, catalyzes the reversible transfer of the terminal phosphate group between ATP and AMP. Plays an important role in cellular energy homeostasis and in adenine nucleotide metabolism. The protein is Adenylate kinase of Streptococcus suis (strain 98HAH33).